Consider the following 691-residue polypeptide: Methionine--tRNA ligase (691 aa).

A 'HIGH' region motif is present at residues 15–25 (PYTNGPIHIGH). Positions 147, 150, 160, and 163 each coordinate Zn(2+). Residues 336-340 (KLSTS) carry the 'KMSKS' region motif. Thr-339 contributes to the ATP binding site. The tRNA-binding domain occupies 589-691 (DFTKMDLRVG…DGVKAGTTIN (103 aa)).

It belongs to the class-I aminoacyl-tRNA synthetase family. MetG type 1 subfamily. As to quaternary structure, homodimer. Zn(2+) is required as a cofactor.

The protein localises to the cytoplasm. It carries out the reaction tRNA(Met) + L-methionine + ATP = L-methionyl-tRNA(Met) + AMP + diphosphate. Functionally, is required not only for elongation of protein synthesis but also for the initiation of all mRNA translation through initiator tRNA(fMet) aminoacylation. The sequence is that of Methionine--tRNA ligase from Christiangramia forsetii (strain DSM 17595 / CGMCC 1.15422 / KT0803) (Gramella forsetii).